We begin with the raw amino-acid sequence, 132 residues long: Large ribosomal subunit protein uL14 (132 aa).

It belongs to the universal ribosomal protein uL14 family. As to quaternary structure, part of the 50S ribosomal subunit. Forms a cluster with proteins L3 and L24e, part of which may contact the 16S rRNA in 2 intersubunit bridges.

Binds to 23S rRNA. Forms part of two intersubunit bridges in the 70S ribosome. This chain is Large ribosomal subunit protein uL14, found in Methanocorpusculum labreanum (strain ATCC 43576 / DSM 4855 / Z).